An 859-amino-acid polypeptide reads, in one-letter code: Leucine--tRNA ligase (859 aa).

Positions 42–52 (PYPSGRLHMGH) match the 'HIGH' region motif. The 'KMSKS' region motif lies at 618-622 (KMSKS). Lysine 621 contacts ATP.

The protein belongs to the class-I aminoacyl-tRNA synthetase family.

The protein resides in the cytoplasm. The catalysed reaction is tRNA(Leu) + L-leucine + ATP = L-leucyl-tRNA(Leu) + AMP + diphosphate. The chain is Leucine--tRNA ligase from Shewanella woodyi (strain ATCC 51908 / MS32).